A 132-amino-acid chain; its full sequence is Large ribosomal subunit protein bL12 (132 aa).

It belongs to the bacterial ribosomal protein bL12 family. As to quaternary structure, homodimer. Part of the ribosomal stalk of the 50S ribosomal subunit. Forms a multimeric L10(L12)X complex, where L10 forms an elongated spine to which 2 to 4 L12 dimers bind in a sequential fashion. Binds GTP-bound translation factors.

Functionally, forms part of the ribosomal stalk which helps the ribosome interact with GTP-bound translation factors. Is thus essential for accurate translation. The sequence is that of Large ribosomal subunit protein bL12 from Prochlorococcus marinus (strain MIT 9211).